Reading from the N-terminus, the 498-residue chain is ATP synthase subunit beta, chloroplastic (498 aa).

172–179 is a binding site for ATP; sequence GGAGVGKT.

The protein belongs to the ATPase alpha/beta chains family. In terms of assembly, F-type ATPases have 2 components, CF(1) - the catalytic core - and CF(0) - the membrane proton channel. CF(1) has five subunits: alpha(3), beta(3), gamma(1), delta(1), epsilon(1). CF(0) has four main subunits: a(1), b(1), b'(1) and c(9-12).

The protein localises to the plastid. The protein resides in the chloroplast thylakoid membrane. The enzyme catalyses ATP + H2O + 4 H(+)(in) = ADP + phosphate + 5 H(+)(out). Functionally, produces ATP from ADP in the presence of a proton gradient across the membrane. The catalytic sites are hosted primarily by the beta subunits. The sequence is that of ATP synthase subunit beta, chloroplastic from Gossypium hirsutum (Upland cotton).